We begin with the raw amino-acid sequence, 101 residues long: uncharacterized protein (101 aa).

This is an uncharacterized protein from Schizosaccharomyces pombe (strain 972 / ATCC 24843) (Fission yeast).